The chain runs to 241 residues: LexA repressor (241 aa).

A DNA-binding region (H-T-H motif) is located at residues 41–61 (FREIGNAAGLKSPSSVKHQLQ). Active-site for autocatalytic cleavage activity residues include serine 165 and lysine 202.

This sequence belongs to the peptidase S24 family. As to quaternary structure, homodimer.

It carries out the reaction Hydrolysis of Ala-|-Gly bond in repressor LexA.. In terms of biological role, represses a number of genes involved in the response to DNA damage (SOS response), including recA and lexA. In the presence of single-stranded DNA, RecA interacts with LexA causing an autocatalytic cleavage which disrupts the DNA-binding part of LexA, leading to derepression of the SOS regulon and eventually DNA repair. The chain is LexA repressor from Bifidobacterium longum subsp. infantis (strain ATCC 15697 / DSM 20088 / JCM 1222 / NCTC 11817 / S12).